A 209-amino-acid polypeptide reads, in one-letter code: Ribosomal RNA large subunit methyltransferase E (209 aa).

S-adenosyl-L-methionine is bound by residues glycine 63, tryptophan 65, aspartate 83, aspartate 99, and aspartate 124. Lysine 164 functions as the Proton acceptor in the catalytic mechanism. A TRAM domain is found at 191 to 209 (EASRGRSREVYIVAMGYMG).

This sequence belongs to the class I-like SAM-binding methyltransferase superfamily. RNA methyltransferase RlmE family.

The protein resides in the cytoplasm. It catalyses the reaction uridine(2552) in 23S rRNA + S-adenosyl-L-methionine = 2'-O-methyluridine(2552) in 23S rRNA + S-adenosyl-L-homocysteine + H(+). In terms of biological role, specifically methylates the uridine in position 2552 of 23S rRNA at the 2'-O position of the ribose in the fully assembled 50S ribosomal subunit. The protein is Ribosomal RNA large subunit methyltransferase E of Histophilus somni (strain 129Pt) (Haemophilus somnus).